The primary structure comprises 310 residues: Methionyl-tRNA formyltransferase (310 aa).

110 to 113 contributes to the (6S)-5,6,7,8-tetrahydrofolate binding site; that stretch reads SLLP.

This sequence belongs to the Fmt family.

It catalyses the reaction L-methionyl-tRNA(fMet) + (6R)-10-formyltetrahydrofolate = N-formyl-L-methionyl-tRNA(fMet) + (6S)-5,6,7,8-tetrahydrofolate + H(+). Its function is as follows. Attaches a formyl group to the free amino group of methionyl-tRNA(fMet). The formyl group appears to play a dual role in the initiator identity of N-formylmethionyl-tRNA by promoting its recognition by IF2 and preventing the misappropriation of this tRNA by the elongation apparatus. The chain is Methionyl-tRNA formyltransferase from Streptomyces coelicolor (strain ATCC BAA-471 / A3(2) / M145).